A 384-amino-acid chain; its full sequence is Succinyl-diaminopimelate desuccinylase (384 aa).

Residue His75 coordinates Zn(2+). Asp77 is an active-site residue. Asp108 lines the Zn(2+) pocket. The active-site Proton acceptor is Glu142. The Zn(2+) site is built by Glu143, Glu171, and His357.

The protein belongs to the peptidase M20A family. DapE subfamily. In terms of assembly, homodimer. Requires Zn(2+) as cofactor. It depends on Co(2+) as a cofactor.

It catalyses the reaction N-succinyl-(2S,6S)-2,6-diaminopimelate + H2O = (2S,6S)-2,6-diaminopimelate + succinate. Its pathway is amino-acid biosynthesis; L-lysine biosynthesis via DAP pathway; LL-2,6-diaminopimelate from (S)-tetrahydrodipicolinate (succinylase route): step 3/3. Its function is as follows. Catalyzes the hydrolysis of N-succinyl-L,L-diaminopimelic acid (SDAP), forming succinate and LL-2,6-diaminopimelate (DAP), an intermediate involved in the bacterial biosynthesis of lysine and meso-diaminopimelic acid, an essential component of bacterial cell walls. The protein is Succinyl-diaminopimelate desuccinylase of Shewanella oneidensis (strain ATCC 700550 / JCM 31522 / CIP 106686 / LMG 19005 / NCIMB 14063 / MR-1).